The primary structure comprises 122 residues: Large ribosomal subunit protein uL14c (122 aa).

It belongs to the universal ribosomal protein uL14 family. Part of the 50S ribosomal subunit.

It is found in the plastid. Its subcellular location is the chloroplast. Binds to 23S rRNA. The protein is Large ribosomal subunit protein uL14c of Manihot esculenta (Cassava).